A 201-amino-acid chain; its full sequence is Recombination protein RecR (201 aa).

Residues 59–74 (CEICGNMDTENMCRIC) form a C4-type zinc finger. The 96-residue stretch at 82–177 (SIIAIVETVA…KISRLASGIP (96 aa)) folds into the Toprim domain.

Belongs to the RecR family.

Its function is as follows. May play a role in DNA repair. It seems to be involved in an RecBC-independent recombinational process of DNA repair. It may act with RecF and RecO. The protein is Recombination protein RecR of Rickettsia conorii (strain ATCC VR-613 / Malish 7).